The primary structure comprises 145 residues: Protein cornichon homolog 1 (145 aa).

Transmembrane regions (helical) follow at residues 5–25 (FAAF…FFAI), 57–77 (IIHG…SILA), and 116–136 (LRIS…YLYA).

It belongs to the cornichon family. As to quaternary structure, interacts with glr-1. In terms of tissue distribution, widely expressed in the nervous system including in the AVA interneurons.

The protein resides in the endoplasmic reticulum membrane. Its subcellular location is the synapse. It is found in the cell projection. The protein localises to the dendrite. Functionally, negatively regulates export of glr-1 from the endoplasmic reticulum to synapses. This is Protein cornichon homolog 1 from Caenorhabditis elegans.